A 35-amino-acid chain; its full sequence is Cytochrome b6-f complex subunit 7 (35 aa).

A helical membrane pass occupies residues 9 to 27 (AGLSIVLTLVGVALGYGIL).

This sequence belongs to the PetM family. The 4 large subunits of the cytochrome b6-f complex are cytochrome b6, subunit IV (17 kDa polypeptide, PetD), cytochrome f and the Rieske protein, while the 4 small subunits are PetG, PetL, PetM and PetN. The complex functions as a dimer.

The protein resides in the cellular thylakoid membrane. Its function is as follows. Component of the cytochrome b6-f complex, which mediates electron transfer between photosystem II (PSII) and photosystem I (PSI), cyclic electron flow around PSI, and state transitions. This is Cytochrome b6-f complex subunit 7 from Synechococcus sp. (strain JA-3-3Ab) (Cyanobacteria bacterium Yellowstone A-Prime).